The chain runs to 109 residues: MQAIHNDKSLLSPFSELNTDNRTQREESGSTFKEQKGGEFSKLLKQSISELNNTQEQSDKALADMATGQIKDLHQAAIAIGKAETSMKLMLEVRNKAISAYKELLRTQI.

The segment at 1–38 (MQAIHNDKSLLSPFSELNTDNRTQREESGSTFKEQKGG) is disordered. A compositionally biased stretch (basic and acidic residues) spans 22–38 (RTQREESGSTFKEQKGG).

The protein belongs to the FliE family.

The protein resides in the bacterial flagellum basal body. This is Flagellar hook-basal body complex protein FliE from Helicobacter acinonychis (strain Sheeba).